The following is a 44-amino-acid chain: Thymosin beta-4 (44 aa).

Positions 1-25 (MADKPDMAEIEKFDKSKLKKTETQE) are enriched in basic and acidic residues. The tract at residues 1 to 44 (MADKPDMAEIEKFDKSKLKKTETQEKNPLPSKETIEQEKQAGES) is disordered. Residue Ala-2 is modified to N-acetylalanine. Lys-4 is subject to N6-acetyllysine. At Lys-12 the chain carries N6-acetyllysine; alternate. A Glycyl lysine isopeptide (Lys-Gly) (interchain with G-Cter in SUMO2); alternate cross-link involves residue Lys-12. At Thr-23 the chain carries Phosphothreonine. Lys-26 is modified (N6-acetyllysine). Phosphoserine is present on Ser-31. Lys-32 is modified (N6-acetyllysine). The span at 33 to 44 (ETIEQEKQAGES) shows a compositional bias: basic and acidic residues. At Thr-34 the chain carries Phosphothreonine. Lys-39 carries the N6-acetyllysine modification.

It belongs to the thymosin beta family. In terms of tissue distribution, originally found in thymus but it is widely distributed in many tissues.

It localises to the cytoplasm. It is found in the cytoskeleton. In terms of biological role, plays an important role in the organization of the cytoskeleton. Binds to and sequesters actin monomers (G actin) and therefore inhibits actin polymerization. Its function is as follows. Seraspenide inhibits the entry of hematopoietic pluripotent stem cells into the S-phase. The polypeptide is Thymosin beta-4 (TMSB4) (Oryctolagus cuniculus (Rabbit)).